The sequence spans 487 residues: 4-alpha-glucanotransferase (487 aa).

The protein belongs to the disproportionating enzyme family.

Its subcellular location is the cytoplasm. It catalyses the reaction Transfers a segment of a (1-&gt;4)-alpha-D-glucan to a new position in an acceptor, which may be glucose or a (1-&gt;4)-alpha-D-glucan.. In terms of biological role, catalyzes a disproportionation reaction in which single or multiple glucose units from oligosaccharides are transferred to the 4-hydroxyl group of acceptor sugars. Glucose, maltose and maltotriose can act as acceptor, whereas of the three only maltotriose can act as donor. The sequence is that of 4-alpha-glucanotransferase (malQ) from Clostridium butyricum.